The following is a 501-amino-acid chain: Betaine aldehyde dehydrogenase, chloroplastic (501 aa).

The transit peptide at 1 to 7 directs the protein to the chloroplast; that stretch reads MAIRVPS. 238–243 is a binding site for NAD(+); it reads GSTATG. The active-site Proton acceptor is glutamate 260. Catalysis depends on cysteine 294, which acts as the Nucleophile.

Belongs to the aldehyde dehydrogenase family. In terms of assembly, homodimer.

The protein resides in the plastid. The protein localises to the chloroplast. It carries out the reaction betaine aldehyde + NAD(+) + H2O = glycine betaine + NADH + 2 H(+). It participates in amine and polyamine biosynthesis; betaine biosynthesis via choline pathway; betaine from betaine aldehyde: step 1/1. This chain is Betaine aldehyde dehydrogenase, chloroplastic (BADH4), found in Amaranthus hypochondriacus (Prince-of-Wales feather).